We begin with the raw amino-acid sequence, 42 residues long: Thymosin beta-10 (42 aa).

2 stretches are compositionally biased toward basic and acidic residues: residues 1-25 (MADK…ETQE) and 33-42 (ETIEQEKQAK). The interval 1–42 (MADKPDMGEINSFDKAKLKKTETQEKNTLPTKETIEQEKQAK) is disordered. N-acetylalanine is present on A2. K4 carries the N6-acetyllysine modification. S12 carries the post-translational modification Phosphoserine. N6-acetyllysine is present on K15. Residues T21, T23, and T34 each carry the phosphothreonine modification. Residue K39 is modified to N6-acetyllysine.

It belongs to the thymosin beta family.

The protein localises to the cytoplasm. It localises to the cytoskeleton. Plays an important role in the organization of the cytoskeleton. Binds to and sequesters actin monomers (G actin) and therefore inhibits actin polymerization. The protein is Thymosin beta-10 (TMSB10) of Sus scrofa (Pig).